We begin with the raw amino-acid sequence, 493 residues long: NADH-quinone oxidoreductase subunit N (493 aa).

The next 14 membrane-spanning stretches (helical) occupy residues 8-28 (ALLPFIVLSAAAVAVMLAIAI), 34-54 (LVFWLTVGGLLAGLSTLPHAS), 71-91 (GLFFHALFLLAALVVALLCLA), 102-122 (EIFVLLLTSTLGALLLVSSAH), 123-143 (LAMFFLGLEVLTISLFPMIAY), 157-177 (YLMLSGLASSFLMFGMAMVYG), 200-220 (ALAGLFLILAAIGFKLSLVPF), 232-252 (PTPVTAFLATVSKASVFALLL), 266-286 (FLCVLGLLAVVSILAGNLLAL), 294-314 (LLAYSSIAHMGYLLTGFVAAG), 325-345 (IAFYLAAYTVTSLTAFGAISA), 370-390 (AAVLTLSLLSLAGIPLTVGFV), 405-427 (WPLVATVVIGSGIGIYYYLRVVL), and 443-463 (PAAGTALAAAALVILAAGLFP). Residues 473-493 (VPQPPPTADSPQRLTATGGLP) are disordered.

Belongs to the complex I subunit 2 family. In terms of assembly, NDH-1 is composed of 14 different subunits. Subunits NuoA, H, J, K, L, M, N constitute the membrane sector of the complex.

It is found in the cell inner membrane. It catalyses the reaction a quinone + NADH + 5 H(+)(in) = a quinol + NAD(+) + 4 H(+)(out). Functionally, NDH-1 shuttles electrons from NADH, via FMN and iron-sulfur (Fe-S) centers, to quinones in the respiratory chain. The immediate electron acceptor for the enzyme in this species is believed to be ubiquinone. Couples the redox reaction to proton translocation (for every two electrons transferred, four hydrogen ions are translocated across the cytoplasmic membrane), and thus conserves the redox energy in a proton gradient. The chain is NADH-quinone oxidoreductase subunit N from Methylococcus capsulatus (strain ATCC 33009 / NCIMB 11132 / Bath).